Here is a 3707-residue protein sequence, read N- to C-terminus: CUB and sushi domain-containing protein 3 (3707 aa).

A disordered region spans residues 1 to 21 (MKGIRKGESRAKESKPWEPGK). Residues 1-42 (MKGIRKGESRAKESKPWEPGKRRCAKCGRLDFILMKKMGIKS) are Cytoplasmic-facing. A helical membrane pass occupies residues 43-63 (GFTFWNLVFLLTVSCVKGFIY). At 64–3630 (TCGGTLKGLN…NQPHGTNSSS (3567 aa)) the chain is on the extracellular side. Intrachain disulfides connect cysteine 65–cysteine 91, cysteine 178–cysteine 218, cysteine 204–cysteine 235, and cysteine 241–cysteine 267. The CUB 1 domain maps to 65-173 (CGGTLKGLNG…HGFKVYYEEL (109 aa)). Residues asparagine 73 and asparagine 90 are each glycosylated (N-linked (GlcNAc...) asparagine). In terms of domain architecture, Sushi 1 spans 176-237 (SSCGNPGVPP…WDFPVPICRA (62 aa)). The CUB 2 domain maps to 241-345 (CGGTMRGSSG…RGFSAPYQGS (105 aa)). Residues asparagine 361 and asparagine 409 are each glycosylated (N-linked (GlcNAc...) asparagine). The interval 394–435 (QRVQVTSLRNSGLDPNTSKDGLSPHPADTQSTRRRPRHAEQI) is disordered. The segment covering 396–413 (VQVTSLRNSGLDPNTSKD) has biased composition (polar residues). The Sushi 2 domain maps to 484–545 (NLCPDPGEPE…WSDHRPVCKV (62 aa)). 6 cysteine pairs are disulfide-bonded: cysteine 486/cysteine 526, cysteine 512/cysteine 543, cysteine 548/cysteine 574, cysteine 664/cysteine 704, cysteine 690/cysteine 717, and cysteine 721/cysteine 747. The CUB 3 domain maps to 548–659 (CGSNLQGPSG…VGFKVNYKEI (112 aa)). Positions 662-719 (ESCGDPGTPLYGIREGDGFSNRDVLRFECQFGFELIGEKSIVCQENNQWSANIPICIF) constitute a Sushi 3 domain. The CUB 4 domain occupies 721–829 (CLSNFTAPMG…RGFNITYNTF (109 aa)). N-linked (GlcNAc...) asparagine glycosylation is found at asparagine 724 and asparagine 823. Positions 832–893 (NECPDPGIPI…WSGLIPKCGA (62 aa)) constitute a Sushi 4 domain. 3 cysteine pairs are disulfide-bonded: cysteine 834–cysteine 875, cysteine 860–cysteine 891, and cysteine 895–cysteine 921. One can recognise a CUB 5 domain in the interval 895–1003 (CGGHFSAPSG…NGFKIHYESV (109 aa)). Asparagine 966 carries N-linked (GlcNAc...) asparagine glycosylation. Residues 1008–1065 (YSCLDPGIPVHGRRYGHDFSIGSTVSFSCDSGYRLSHEEPLLCEKNHWWSHPLPTCDA) enclose the Sushi 5 domain. 3 disulfide bridges follow: cysteine 1010–cysteine 1050, cysteine 1036–cysteine 1063, and cysteine 1067–cysteine 1093. A CUB 6 domain is found at 1067–1177 (CGGDVRGPSG…EGFNITFSEY (111 aa)). N-linked (GlcNAc...) asparagine glycans are attached at residues asparagine 1092, asparagine 1126, and asparagine 1171. The 60-residue stretch at 1180-1239 (EPCEDPGIPQYGSRIGFNFGIGDTLTFSCSSGYRLEGTSEIICLGGGRRVWSAPLPRCVA) folds into the Sushi 6 domain. Disulfide bonds link cysteine 1182–cysteine 1222, cysteine 1208–cysteine 1237, and cysteine 1241–cysteine 1267. Positions 1241-1349 (CGASATNNEG…EGFQLVYTSF (109 aa)) constitute a CUB 7 domain. Asparagine 1280 carries an N-linked (GlcNAc...) asparagine glycan. A Sushi 7 domain is found at 1352–1412 (SHCEDPGIPQ…WDYPLPSCIA (61 aa)). Intrachain disulfides connect cysteine 1354–cysteine 1395, cysteine 1381–cysteine 1410, cysteine 1414–cysteine 1441, cysteine 1528–cysteine 1568, cysteine 1554–cysteine 1584, cysteine 1588–cysteine 1614, cysteine 1701–cysteine 1741, cysteine 1727–cysteine 1758, cysteine 1762–cysteine 1788, cysteine 1878–cysteine 1918, cysteine 1904–cysteine 1935, and cysteine 1939–cysteine 1965. One can recognise a CUB 8 domain in the interval 1414-1523 (CGGRFKGESS…SGFAIQFSSS (110 aa)). Residues 1526–1586 (TACRDPGVPM…WQPSPPVCIA (61 aa)) form the Sushi 8 domain. Asparagine 1536 carries N-linked (GlcNAc...) asparagine glycosylation. The 109-residue stretch at 1588–1696 (CGGNLTGSSG…TGFHLEYKAK (109 aa)) folds into the CUB 9 domain. N-linked (GlcNAc...) asparagine glycosylation is found at asparagine 1591 and asparagine 1709. Residues 1699 to 1760 (ESCFDPGNIM…WNRALPSCHA (62 aa)) form the Sushi 9 domain. The region spanning 1762–1870 (CGSRSTGSEG…KGFHFVYQAV (109 aa)) is the CUB 10 domain. Asparagine 1781 carries an N-linked (GlcNAc...) asparagine glycan. Residues 1876–1937 (TQCSSVPEPR…WNDSLPTCIV (62 aa)) form the Sushi 10 domain. An N-linked (GlcNAc...) asparagine glycan is attached at asparagine 1929. In terms of domain architecture, CUB 11 spans 1939–2047 (CGGILTKRKG…AGFHLEYTAI (109 aa)). N-linked (GlcNAc...) asparagine glycosylation is present at asparagine 2019. One can recognise a Sushi 11 domain in the interval 2050–2109 (DSCPEPQTPSSGIKIGDRYMVGDVVSFQCDQGYSLQGHSHITCMPGPVRRWNYPIPICLA). Disulfide bonds link cysteine 2052/cysteine 2092, cysteine 2078/cysteine 2107, and cysteine 2111/cysteine 2137. The CUB 12 domain occupies 2111-2219 (CGGAMSDFSG…QGFHIVYQAY (109 aa)). A glycan (N-linked (GlcNAc...) asparagine) is linked at asparagine 2155. The region spanning 2222–2281 (QSCPDPRPFRNGFVIGNDFTVGQTISFECFPGYTLIGNSALTCLHGVSRNWNHPLPRCEA) is the Sushi 12 domain. Disulfide bonds link cysteine 2224–cysteine 2264, cysteine 2250–cysteine 2279, and cysteine 2283–cysteine 2309. In terms of domain architecture, CUB 13 spans 2283 to 2394 (CGGNITAMNG…LSYHAYQLRV (112 aa)). 3 N-linked (GlcNAc...) asparagine glycosylation sites follow: asparagine 2286, asparagine 2291, and asparagine 2324. Residues 2393–2454 (RVCQPPPPVP…MDGAPPVCQV (62 aa)) enclose the Sushi 13 domain. 3 cysteine pairs are disulfide-bonded: cysteine 2395-cysteine 2437, cysteine 2423-cysteine 2452, and cysteine 2456-cysteine 2484. Residues 2456 to 2567 (CPANELRLDS…KGFRIRYIAF (112 aa)) enclose the CUB 14 domain. N-linked (GlcNAc...) asparagine glycans are attached at residues asparagine 2495 and asparagine 2537. Sushi domains are found at residues 2567 to 2629 (FYCS…ACQA), 2630 to 2691 (ISCG…RCVV), 2692 to 2756 (VTCP…YCQI), 2757 to 2814 (ISCG…RCLA), 2815 to 2872 (GHCG…SCVP), 2873 to 2930 (VSCG…MCKV), 2931 to 2992 (VNCS…ECIM), 2993 to 3050 (IDCG…HCSG), 3054 to 3111 (GTCG…ECKA), 3112 to 3170 (VQCG…NCTI), 3171 to 3230 (ISCG…TCRA), 3231 to 3288 (VTCP…QCLP), 3289 to 3346 (KFCG…HCIE), 3350 to 3408 (TSCE…ECIP), and 3409 to 3468 (HSCK…ICEA). Disulfide bonds link cysteine 2569–cysteine 2610, cysteine 2596–cysteine 2627, cysteine 2632–cysteine 2674, cysteine 2658–cysteine 2689, cysteine 2694–cysteine 2739, cysteine 2725–cysteine 2754, cysteine 2759–cysteine 2799, cysteine 2785–cysteine 2812, cysteine 2817–cysteine 2857, cysteine 2843–cysteine 2870, cysteine 2875–cysteine 2915, and cysteine 2901–cysteine 2928. N-linked (GlcNAc...) asparagine glycosylation is found at asparagine 2711 and asparagine 2742. A glycan (N-linked (GlcNAc...) asparagine) is linked at asparagine 2862. Asparagine 2932 and asparagine 2952 each carry an N-linked (GlcNAc...) asparagine glycan. 18 disulfides stabilise this stretch: cysteine 2933-cysteine 2977, cysteine 2963-cysteine 2990, cysteine 2995-cysteine 3035, cysteine 3021-cysteine 3048, cysteine 3056-cysteine 3096, cysteine 3082-cysteine 3109, cysteine 3114-cysteine 3155, cysteine 3141-cysteine 3168, cysteine 3173-cysteine 3215, cysteine 3199-cysteine 3228, cysteine 3233-cysteine 3273, cysteine 3259-cysteine 3286, cysteine 3291-cysteine 3331, cysteine 3317-cysteine 3344, cysteine 3352-cysteine 3393, cysteine 3379-cysteine 3406, cysteine 3411-cysteine 3453, and cysteine 3438-cysteine 3466. The N-linked (GlcNAc...) asparagine glycan is linked to asparagine 3099. N-linked (GlcNAc...) asparagine glycans are attached at residues asparagine 3158, asparagine 3167, asparagine 3194, asparagine 3208, and asparagine 3218. Asparagine 3276 carries an N-linked (GlcNAc...) asparagine glycan. Asparagine 3364 carries N-linked (GlcNAc...) asparagine glycosylation. Asparagine 3522, asparagine 3529, asparagine 3612, asparagine 3618, and asparagine 3627 each carry an N-linked (GlcNAc...) asparagine glycan. Residues 3631–3651 (VAIAILVPFFALIFAGFGFYL) traverse the membrane as a helical segment. The Cytoplasmic portion of the chain corresponds to 3652–3707 (YKQRTAPKTQYTGCSVHENNNGQAAFENPMYDTNAKSVEGKAVRFDPNLNTVCTMV).

It belongs to the CSMD family. As to expression, weakly expressed in most tissues, except in brain. Expressed at intermediate level in brain, including cerebellum, substantia nigra, thalamus, spinal cord, hippocampus and fetal brain. Also expressed in testis.

Its subcellular location is the cell membrane. In terms of biological role, involved in dendrite development. The sequence is that of CUB and sushi domain-containing protein 3 (CSMD3) from Homo sapiens (Human).